A 555-amino-acid polypeptide reads, in one-letter code: Phosphoglucomutase (555 aa).

Residues R22 and S114 each contribute to the alpha-D-glucose 1,6-bisphosphate site. S114 functions as the Phosphoserine intermediate in the catalytic mechanism. Mg(2+) is bound by residues S114, D279, D281, and D283. A Phosphoserine modification is found at S114. Alpha-D-glucose 1,6-bisphosphate contacts are provided by D283, R284, T347, E366, S368, and K379.

This sequence belongs to the phosphohexose mutase family. Monomer. Mg(2+) serves as cofactor.

The protein localises to the cytoplasm. It carries out the reaction alpha-D-glucose 1-phosphate = alpha-D-glucose 6-phosphate. The catalysed reaction is O-phospho-L-seryl-[protein] + alpha-D-glucose 1-phosphate = alpha-D-glucose 1,6-bisphosphate + L-seryl-[protein]. It catalyses the reaction alpha-D-glucose 1,6-bisphosphate + L-seryl-[protein] = O-phospho-L-seryl-[protein] + alpha-D-glucose 6-phosphate. Its function is as follows. Catalyzes the reversible isomerization of alpha-D-glucose 1-phosphate to alpha-D-glucose 6-phosphate. The mechanism proceeds via the intermediate compound alpha-D-glucose 1,6-bisphosphate. Key enzyme in hexose metabolism. The reverse reaction is an essential step for biosynthesis because glucose 1-phosphate is the starting point for the synthesis of UDP-glucose, which acts as a precursor for the synthesis of oligosaccharides and trehalose. The chain is Phosphoglucomutase (pgmA) from Aspergillus oryzae (strain ATCC 42149 / RIB 40) (Yellow koji mold).